We begin with the raw amino-acid sequence, 259 residues long: Phosphatidate cytidylyltransferase (259 aa).

Transmembrane regions (helical) follow at residues 31–51 (LVIF…CFAI), 69–89 (PLVL…IGLL), 103–123 (FFKS…LIKI), 129–149 (YYLL…YYIG), 170–190 (FLGG…YGIL), 193–213 (FLLG…KSFI), and 236–256 (FDAL…GELN).

This sequence belongs to the CDS family.

The protein localises to the cell membrane. The enzyme catalyses a 1,2-diacyl-sn-glycero-3-phosphate + CTP + H(+) = a CDP-1,2-diacyl-sn-glycerol + diphosphate. The protein operates within phospholipid metabolism; CDP-diacylglycerol biosynthesis; CDP-diacylglycerol from sn-glycerol 3-phosphate: step 3/3. This Aquifex aeolicus (strain VF5) protein is Phosphatidate cytidylyltransferase (cdsA).